The sequence spans 267 residues: Formamidopyrimidine-DNA glycosylase (267 aa).

Residue proline 2 is the Schiff-base intermediate with DNA of the active site. Glutamate 3 acts as the Proton donor in catalysis. Lysine 58 functions as the Proton donor; for beta-elimination activity in the catalytic mechanism. The DNA site is built by histidine 91, arginine 110, and arginine 152. The FPG-type zinc finger occupies 233-267; the sequence is DVYGRGTDACTRCGGALEEIRLGNRSTVFCPRCQT. Arginine 257 acts as the Proton donor; for delta-elimination activity in catalysis.

This sequence belongs to the FPG family. Monomer. Zn(2+) serves as cofactor.

It carries out the reaction Hydrolysis of DNA containing ring-opened 7-methylguanine residues, releasing 2,6-diamino-4-hydroxy-5-(N-methyl)formamidopyrimidine.. The catalysed reaction is 2'-deoxyribonucleotide-(2'-deoxyribose 5'-phosphate)-2'-deoxyribonucleotide-DNA = a 3'-end 2'-deoxyribonucleotide-(2,3-dehydro-2,3-deoxyribose 5'-phosphate)-DNA + a 5'-end 5'-phospho-2'-deoxyribonucleoside-DNA + H(+). Its function is as follows. Involved in base excision repair of DNA damaged by oxidation or by mutagenic agents. Acts as a DNA glycosylase that recognizes and removes damaged bases. Has a preference for oxidized purines, such as 7,8-dihydro-8-oxoguanine (8-oxoG). Has AP (apurinic/apyrimidinic) lyase activity and introduces nicks in the DNA strand. Cleaves the DNA backbone by beta-delta elimination to generate a single-strand break at the site of the removed base with both 3'- and 5'-phosphates. This chain is Formamidopyrimidine-DNA glycosylase, found in Geobacter metallireducens (strain ATCC 53774 / DSM 7210 / GS-15).